The chain runs to 330 residues: DNA-directed RNA polymerase subunit alpha (330 aa).

Positions 1 to 231 are alpha N-terminal domain (alpha-NTD); it reads MAILAFQKPD…IYHFMLFSDE (231 aa). Residues 253-330 form an alpha C-terminal domain (alpha-CTD) region; that stretch reads MRQLLKTKLV…DISKYKLDKE (78 aa).

This sequence belongs to the RNA polymerase alpha chain family. In terms of assembly, homodimer. The RNAP catalytic core consists of 2 alpha, 1 beta, 1 beta' and 1 omega subunit. When a sigma factor is associated with the core the holoenzyme is formed, which can initiate transcription.

It catalyses the reaction RNA(n) + a ribonucleoside 5'-triphosphate = RNA(n+1) + diphosphate. In terms of biological role, DNA-dependent RNA polymerase catalyzes the transcription of DNA into RNA using the four ribonucleoside triphosphates as substrates. In Phocaeicola vulgatus (strain ATCC 8482 / DSM 1447 / JCM 5826 / CCUG 4940 / NBRC 14291 / NCTC 11154) (Bacteroides vulgatus), this protein is DNA-directed RNA polymerase subunit alpha.